The chain runs to 146 residues: UPF0178 protein BCQ_2874 (146 aa).

It belongs to the UPF0178 family.

The chain is UPF0178 protein BCQ_2874 from Bacillus cereus (strain Q1).